We begin with the raw amino-acid sequence, 499 residues long: NADH-quinone oxidoreductase subunit N (499 aa).

14 consecutive transmembrane segments (helical) span residues 16–36, 42–62, 77–97, 109–129, 133–153, 167–187, 208–228, 252–272, 274–294, 302–322, 327–347, 376–396, 411–433, and 463–483; these read AAFS…LDAF, AIPW…ITHL, GGFV…TILL, YGEV…LGSA, VSIF…TGFI, FLLG…MYGA, LLFW…VSAA, ATKA…VPGG, WQLS…VMAL, LLAY…SAGT, AGAL…FGVM, GSTM…GGFI, TWLV…RVVY, and GTLV…GGVL.

It belongs to the complex I subunit 2 family. NDH-1 is composed of 14 different subunits. Subunits NuoA, H, J, K, L, M, N constitute the membrane sector of the complex.

Its subcellular location is the cell inner membrane. It carries out the reaction a quinone + NADH + 5 H(+)(in) = a quinol + NAD(+) + 4 H(+)(out). NDH-1 shuttles electrons from NADH, via FMN and iron-sulfur (Fe-S) centers, to quinones in the respiratory chain. The immediate electron acceptor for the enzyme in this species is believed to be a menaquinone. Couples the redox reaction to proton translocation (for every two electrons transferred, four hydrogen ions are translocated across the cytoplasmic membrane), and thus conserves the redox energy in a proton gradient. The sequence is that of NADH-quinone oxidoreductase subunit N from Salinibacter ruber (strain DSM 13855 / M31).